The sequence spans 941 residues: Glycine dehydrogenase (decarboxylating) (941 aa).

K692 is modified (N6-(pyridoxal phosphate)lysine).

This sequence belongs to the GcvP family. In terms of assembly, the glycine cleavage system is composed of four proteins: P, T, L and H. Pyridoxal 5'-phosphate is required as a cofactor.

It carries out the reaction N(6)-[(R)-lipoyl]-L-lysyl-[glycine-cleavage complex H protein] + glycine + H(+) = N(6)-[(R)-S(8)-aminomethyldihydrolipoyl]-L-lysyl-[glycine-cleavage complex H protein] + CO2. The glycine cleavage system catalyzes the degradation of glycine. The P protein binds the alpha-amino group of glycine through its pyridoxal phosphate cofactor; CO(2) is released and the remaining methylamine moiety is then transferred to the lipoamide cofactor of the H protein. This Mycobacterium bovis (strain ATCC BAA-935 / AF2122/97) protein is Glycine dehydrogenase (decarboxylating).